Reading from the N-terminus, the 909-residue chain is DNA mismatch repair protein MutS (909 aa).

Gly614 to Ser621 contributes to the ATP binding site. Residues Leu798–Ile827 form a disordered region. Over residues Ser818–Ile827 the composition is skewed to basic and acidic residues.

This sequence belongs to the DNA mismatch repair MutS family.

This protein is involved in the repair of mismatches in DNA. It is possible that it carries out the mismatch recognition step. This protein has a weak ATPase activity. This Clostridium novyi (strain NT) protein is DNA mismatch repair protein MutS.